The primary structure comprises 177 residues: Adenine phosphoribosyltransferase (177 aa).

Belongs to the purine/pyrimidine phosphoribosyltransferase family. In terms of assembly, homodimer.

It is found in the cytoplasm. The enzyme catalyses AMP + diphosphate = 5-phospho-alpha-D-ribose 1-diphosphate + adenine. It participates in purine metabolism; AMP biosynthesis via salvage pathway; AMP from adenine: step 1/1. Catalyzes a salvage reaction resulting in the formation of AMP, that is energically less costly than de novo synthesis. The chain is Adenine phosphoribosyltransferase from Cutibacterium acnes (strain DSM 16379 / KPA171202) (Propionibacterium acnes).